The primary structure comprises 135 residues: Global transcriptional regulator Spx 2 (135 aa).

The active site involves cysteine 10.

This sequence belongs to the ArsC family. Spx subfamily. In terms of assembly, interacts with the C-terminal domain of the alpha subunit of the RNAP.

The protein localises to the cytoplasm. Functionally, global transcriptional regulator that plays a key role in stress response and exerts either positive or negative regulation of genes. Acts by interacting with the C-terminal domain of the alpha subunit of the RNA polymerase (RNAP). This interaction can enhance binding of RNAP to the promoter region of target genes and stimulate their transcription, or block interaction of RNAP with activator. This is Global transcriptional regulator Spx 2 from Oceanobacillus iheyensis (strain DSM 14371 / CIP 107618 / JCM 11309 / KCTC 3954 / HTE831).